The primary structure comprises 226 residues: Protein GrpE (226 aa).

Disordered regions lie at residues 1 to 24 and 205 to 226; these read MADE…PRDR and GVSK…EDNA. A compositionally biased stretch (polar residues) spans 217–226; the sequence is NGASTSEDNA.

This sequence belongs to the GrpE family. In terms of assembly, homodimer.

It is found in the cytoplasm. Participates actively in the response to hyperosmotic and heat shock by preventing the aggregation of stress-denatured proteins, in association with DnaK and GrpE. It is the nucleotide exchange factor for DnaK and may function as a thermosensor. Unfolded proteins bind initially to DnaJ; upon interaction with the DnaJ-bound protein, DnaK hydrolyzes its bound ATP, resulting in the formation of a stable complex. GrpE releases ADP from DnaK; ATP binding to DnaK triggers the release of the substrate protein, thus completing the reaction cycle. Several rounds of ATP-dependent interactions between DnaJ, DnaK and GrpE are required for fully efficient folding. The chain is Protein GrpE from Brucella melitensis biotype 1 (strain ATCC 23456 / CCUG 17765 / NCTC 10094 / 16M).